The sequence spans 462 residues: MARLRRRWTAEEDTLLRRAVENATTQGRPLLWRDLAKSVPGRSNKDCRRRWWNSLADGTTKGPWCEEEDERLIEAVRKYGTNWSRVSRAIRSRNPDQCSSHWSQVLDPGINYCDWTPEEDANLLHAVLTHSTNWATIAASHVPPRTRLALKNRYSTLRLKHENESKRESTIRKSVETPPSNFEPTMAISKDVKWTPPAQIHQGRGPDPVDVLIESDEEEDDDDDDEDNEEDDGDDENRGDGNSKNSMPHIELGNSLNGVDNGAVDIQMQDTGVTASNDWADFTEPSALPPLDYFHHDAQHIPMDSWANDTESHVQYEDLLELTPGENYLCDMDDSGAMNTGVQYKSYGSTPTNIDLSNPIGFHELHRTVEIFPSTTTGMDSSSAPGSRDTPPSMHFGTSASTTPRTSISGWSHQSAHYQVCVNMICTGAQMESLMTGLASLGTCITMKIDIKEDKAPLENQL.

HTH myb-type domains follow at residues 1–54 (MARL…WWNS), 56–110 (ADGT…DPGI), and 113–162 (CDWT…LKHE). DNA-binding regions (H-T-H motif) lie at residues 32-52 (WRDL…RRWW), 83-106 (WSRV…SQVL), and 134-158 (WATI…STLR). A compositionally biased stretch (basic and acidic residues) spans 159-175 (LKHENESKRESTIRKSV). Disordered stretches follow at residues 159–184 (LKHE…NFEP), 216–262 (DEEE…VDNG), and 374–408 (STTT…RTSI). Over residues 216–235 (DEEEDDDDDDEDNEEDDGDD) the composition is skewed to acidic residues. Composition is skewed to polar residues over residues 374–385 (STTTGMDSSSAP) and 396–408 (FGTS…RTSI).

Its subcellular location is the nucleus. Its function is as follows. Myb-like transcriptional regulator; part of the gene cluster that mediates the biosynthesis of the phthalide-terpenoid hybrid 11'-O-desmethylfendlerol. In Annulohypoxylon moriforme (Filamentous fungus), this protein is Myb-like transcriptional regulator mfmK.